Reading from the N-terminus, the 90-residue chain is Small ribosomal subunit protein uS15 (90 aa).

Belongs to the universal ribosomal protein uS15 family. Part of the 30S ribosomal subunit. Forms a bridge to the 50S subunit in the 70S ribosome, contacting the 23S rRNA.

In terms of biological role, one of the primary rRNA binding proteins, it binds directly to 16S rRNA where it helps nucleate assembly of the platform of the 30S subunit by binding and bridging several RNA helices of the 16S rRNA. Its function is as follows. Forms an intersubunit bridge (bridge B4) with the 23S rRNA of the 50S subunit in the ribosome. The polypeptide is Small ribosomal subunit protein uS15 (Wolbachia sp. subsp. Brugia malayi (strain TRS)).